A 122-amino-acid chain; its full sequence is Small ribosomal subunit protein uS13 (122 aa).

Residues 95-122 form a disordered region; sequence GLPVHGQRTHTNARTRKGPRKGAVGKKK.

This sequence belongs to the universal ribosomal protein uS13 family. As to quaternary structure, part of the 30S ribosomal subunit. Forms a loose heterodimer with protein S19. Forms two bridges to the 50S subunit in the 70S ribosome.

Its function is as follows. Located at the top of the head of the 30S subunit, it contacts several helices of the 16S rRNA. In the 70S ribosome it contacts the 23S rRNA (bridge B1a) and protein L5 of the 50S subunit (bridge B1b), connecting the 2 subunits; these bridges are implicated in subunit movement. Contacts the tRNAs in the A and P-sites. The sequence is that of Small ribosomal subunit protein uS13 from Lawsonia intracellularis (strain PHE/MN1-00).